Reading from the N-terminus, the 500-residue chain is NAD(P)H-quinone oxidoreductase subunit 2 A, chloroplastic (500 aa).

13 helical membrane passes run Leu-14–Leu-34, Ile-47–Phe-67, Ile-89–Ile-109, Met-114–Cys-134, Phe-139–Tyr-159, Tyr-173–Gly-193, Pro-217–Ala-237, Trp-285–Ile-305, Met-313–Asp-333, Tyr-344–Leu-364, Ala-385–Phe-405, Leu-408–Leu-428, and Met-474–Ile-494.

Belongs to the complex I subunit 2 family. As to quaternary structure, NDH is composed of at least 16 different subunits, 5 of which are encoded in the nucleus.

It localises to the plastid. It is found in the chloroplast thylakoid membrane. It carries out the reaction a plastoquinone + NADH + (n+1) H(+)(in) = a plastoquinol + NAD(+) + n H(+)(out). The catalysed reaction is a plastoquinone + NADPH + (n+1) H(+)(in) = a plastoquinol + NADP(+) + n H(+)(out). NDH shuttles electrons from NAD(P)H:plastoquinone, via FMN and iron-sulfur (Fe-S) centers, to quinones in the photosynthetic chain and possibly in a chloroplast respiratory chain. The immediate electron acceptor for the enzyme in this species is believed to be plastoquinone. Couples the redox reaction to proton translocation, and thus conserves the redox energy in a proton gradient. In Pelargonium hortorum (Common geranium), this protein is NAD(P)H-quinone oxidoreductase subunit 2 A, chloroplastic.